Consider the following 508-residue polypeptide: Endo-4-O-sulfatase (508 aa).

Serine 84 is modified (3-oxoalanine (Ser)).

The protein belongs to the sulfatase family. The conversion to 3-oxoalanine (also known as C-formylglycine, FGly), of a serine or cysteine residue in prokaryotes and of a cysteine residue in eukaryotes, is critical for catalytic activity.

Its function is as follows. Endosulfatase involved in the degradation of the glycosaminoglycans (GAGs) chondroitin sulfate (CS) and dermatan sulfate (DS). Efficiently hydrolyzes sulfate groups from a broad range of substrate size, including disaccharide to high molecular weight CS and DS polymers. Has a strict specificity for the 4-O-sulfate groups of galactosamine. GAG-specific sulfatases play a key role in the persistence of the major human gut symbiont B.thetaiotaomicron in the host gastrointestinal tract. The chain is Endo-4-O-sulfatase from Bacteroides thetaiotaomicron (strain ATCC 29148 / DSM 2079 / JCM 5827 / CCUG 10774 / NCTC 10582 / VPI-5482 / E50).